The following is a 179-amino-acid chain: Peptide methionine sulfoxide reductase MsrA (179 aa).

The active site involves Cys14.

Belongs to the MsrA Met sulfoxide reductase family.

The catalysed reaction is L-methionyl-[protein] + [thioredoxin]-disulfide + H2O = L-methionyl-(S)-S-oxide-[protein] + [thioredoxin]-dithiol. It carries out the reaction [thioredoxin]-disulfide + L-methionine + H2O = L-methionine (S)-S-oxide + [thioredoxin]-dithiol. Its function is as follows. Has an important function as a repair enzyme for proteins that have been inactivated by oxidation. Catalyzes the reversible oxidation-reduction of methionine sulfoxide in proteins to methionine. This chain is Peptide methionine sulfoxide reductase MsrA, found in Nitrobacter winogradskyi (strain ATCC 25391 / DSM 10237 / CIP 104748 / NCIMB 11846 / Nb-255).